We begin with the raw amino-acid sequence, 485 residues long: NADH-quinone oxidoreductase subunit N (485 aa).

Transmembrane regions (helical) follow at residues 8–28, 35–55, 71–91, 105–125, 127–147, 159–179, 203–223, 235–255, 271–291, 297–317, 326–346, 373–393, 408–430, and 455–475; these read LIALLPLLIVGLTVVVVMLSI, FLNATLSVIGLNAALVSLWFV, GFAMLYTGLVLLASLATCTFA, FYLLVLIAALGGILLANANHL, SLFLGIELISLPLFGLVGYAF, YTILSAAASSFLLFGMALVYA, LLAGFGLMIVGLGFKLSLVPF, PAPVSTFLATASKIAIFGVVM, VVLAIIAFASIIFGNLMALSQ, LLGYSSISHLGYLLVALIALQ, VGVYLAGYLFSSLGAFGVVSL, AAVMTVMMLSLAGIPMTLGFI, WWLVGAVVVGSASGLYYYLRVAV, and IVVLISALLVLVLGVWPQPLI.

It belongs to the complex I subunit 2 family. NDH-1 is composed of 13 different subunits. Subunits NuoA, H, J, K, L, M, N constitute the membrane sector of the complex.

It is found in the cell inner membrane. The catalysed reaction is a quinone + NADH + 5 H(+)(in) = a quinol + NAD(+) + 4 H(+)(out). NDH-1 shuttles electrons from NADH, via FMN and iron-sulfur (Fe-S) centers, to quinones in the respiratory chain. The immediate electron acceptor for the enzyme in this species is believed to be ubiquinone. Couples the redox reaction to proton translocation (for every two electrons transferred, four hydrogen ions are translocated across the cytoplasmic membrane), and thus conserves the redox energy in a proton gradient. In Shigella sonnei (strain Ss046), this protein is NADH-quinone oxidoreductase subunit N.